A 235-amino-acid polypeptide reads, in one-letter code: Endonuclease V (235 aa).

Residues Asp47 and Asp117 each coordinate Mg(2+).

This sequence belongs to the endonuclease V family. The cofactor is Mg(2+).

It localises to the cytoplasm. It catalyses the reaction Endonucleolytic cleavage at apurinic or apyrimidinic sites to products with a 5'-phosphate.. Its function is as follows. DNA repair enzyme involved in the repair of deaminated bases. Selectively cleaves double-stranded DNA at the second phosphodiester bond 3' to a deoxyinosine leaving behind the intact lesion on the nicked DNA. The protein is Endonuclease V of Protochlamydia amoebophila (strain UWE25).